A 417-amino-acid polypeptide reads, in one-letter code: Secernin-3 (417 aa).

Positions 1-5 (MYPRS) are excised as a propeptide. Residue Cys-6 is part of the active site. Cys-6 is subject to Glyoxylic acid (Cys); alternate. The residue at position 6 (Cys-6) is a Pyruvic acid (Cys); alternate.

This sequence belongs to the peptidase C69 family. Secernin subfamily.

Its function is as follows. Plays a role in thermal nociception. The chain is Secernin-3 (scrn3) from Danio rerio (Zebrafish).